Reading from the N-terminus, the 370-residue chain is Immunoglobulin superfamily member 5 (370 aa).

An N-terminal signal peptide occupies residues 1-24 (MEGSWRDVLAVLVILAQLTASGSS). Ig-like V-type domains lie at 25–125 (YQII…LSVQ) and 128–215 (GTLN…KSLT). Residues 25-239 (YQIIEGPQNV…EEGPALPTWA (215 aa)) lie on the Extracellular side of the membrane. 2 N-linked (GlcNAc...) asparagine glycosylation sites follow: N33 and N45. A disulfide bond links C46 and C109. N146, N196, and N217 each carry an N-linked (GlcNAc...) asparagine glycan. C149 and C201 are joined by a disulfide. The chain crosses the membrane as a helical span at residues 240–260 (IILLAVAFSLLLILIIVLIII). Topologically, residues 261 to 370 (FCCCCASRRE…PQKVRNVTLV (110 aa)) are cytoplasmic. Positions 284–359 (ANMRTNKADP…THPRVSFDIA (76 aa)) are disordered. A compositionally biased stretch (basic and acidic residues) spans 289 to 301 (NKADPETKLKGGK).

Belongs to the immunoglobulin superfamily. In terms of assembly, interacts with MAGI1 at tight junctions, forms a tripartite complex with NPHS1. Interacts with LNX1 isoform 2 via its PDZ 2 domain, it may also interact with other isoforms containing this domain. In terms of processing, N-glycosylated. In terms of tissue distribution, localized to kidney glomeruli and small intestinal epithelial cells. In kidney glomeruli, it is localized at slit diaphragm. Also found in spermatogonia, gonocytes, hematopoietic stem cells and Sertoli cells.

It localises to the apical cell membrane. The protein resides in the cell junction. The protein localises to the tight junction. Functionally, provides, together with MAGI1, an adhesion machinery at tight junctions, which may regulate the permeability of kidney glomerulus and small intestinal epithelial cells. Mediates calcium-independent homophilic cell adhesion. In testis, it may function as a cell adhesion molecule rather than a tight-junction protein. It may participate in the adhesion between spermatogonia-spermatogonia, spermatogonia-Sertoli cells, and Sertoli cells-Sertoli cells. The polypeptide is Immunoglobulin superfamily member 5 (Igsf5) (Mus musculus (Mouse)).